We begin with the raw amino-acid sequence, 500 residues long: Cholesterol 24-hydroxylase (500 aa).

A helical transmembrane segment spans residues 3-23 (PGLLLLGSAVLLAFGLCCTFV). C437 provides a ligand contact to heme.

The protein belongs to the cytochrome P450 family. Heme is required as a cofactor. As to expression, expressed in high level in the pyramidal cells of the hippocampus, Purkinje cells of the cerebellum, and neuronal cell bodies in layers II/III, V, and VI of the cortex. Expressed in hippocampal and cerebellar interneurons, in retinal ganglion cells, and in a subset of retinal cells localized to the inner nuclear layer (at protein level).

It is found in the endoplasmic reticulum membrane. Its subcellular location is the microsome membrane. The protein resides in the postsynapse. The protein localises to the presynapse. It localises to the cell projection. It is found in the dendrite. It carries out the reaction cholesterol + reduced [NADPH--hemoprotein reductase] + O2 = (24S)-hydroxycholesterol + oxidized [NADPH--hemoprotein reductase] + H2O + H(+). The enzyme catalyses cholestanol + reduced [NADPH--hemoprotein reductase] + O2 = (24S)-hydroxycholestanol + oxidized [NADPH--hemoprotein reductase] + H2O + H(+). It catalyses the reaction 7-dehydrocholesterol + reduced [NADPH--hemoprotein reductase] + O2 = cholesta-5,7-dien-3beta,24S-diol + oxidized [NADPH--hemoprotein reductase] + H2O + H(+). The catalysed reaction is 7-dehydrocholesterol + reduced [NADPH--hemoprotein reductase] + O2 = cholesta-5,7-dien-3beta,25-diol + oxidized [NADPH--hemoprotein reductase] + H2O + H(+). It carries out the reaction desmosterol + reduced [NADPH--hemoprotein reductase] + O2 = (24Z),26-hydroxydesmosterol + oxidized [NADPH--hemoprotein reductase] + H2O + H(+). The enzyme catalyses desmosterol + reduced [NADPH--hemoprotein reductase] + O2 = (24S)-25-epoxycholesterol + oxidized [NADPH--hemoprotein reductase] + H2O + H(+). It catalyses the reaction 4beta-hydroxycholesterol + reduced [NADPH--hemoprotein reductase] + O2 = 4beta,24S-dihydroxycholesterol + oxidized [NADPH--hemoprotein reductase] + H2O + H(+). The catalysed reaction is (24S)-hydroxycholesterol + reduced [NADPH--hemoprotein reductase] + O2 = (24S,25R)-24,26-dihydroxycholesterol + oxidized [NADPH--hemoprotein reductase] + H2O + H(+). It carries out the reaction (24S)-hydroxycholesterol + reduced [NADPH--hemoprotein reductase] + O2 = 24S,25-dihydroxycholesterol + oxidized [NADPH--hemoprotein reductase] + H2O + H(+). The enzyme catalyses 7alpha-hydroxycholesterol + reduced [NADPH--hemoprotein reductase] + O2 = (24S)-7alpha-dihydroxycholesterol + oxidized [NADPH--hemoprotein reductase] + H2O + H(+). It catalyses the reaction progesterone + reduced [NADPH--hemoprotein reductase] + O2 = 17alpha-hydroxyprogesterone + oxidized [NADPH--hemoprotein reductase] + H2O + H(+). The catalysed reaction is testosterone + reduced [NADPH--hemoprotein reductase] + O2 = 16beta,17beta-dihydroxyandrost-4-en-3-one + oxidized [NADPH--hemoprotein reductase] + H2O + H(+). It carries out the reaction testosterone + reduced [NADPH--hemoprotein reductase] + O2 = 2-hydroxytestosterone + oxidized [NADPH--hemoprotein reductase] + H2O + H(+). The enzyme catalyses testosterone + reduced [NADPH--hemoprotein reductase] + O2 = 6beta,17beta-dihydroxyandrost-4-en-3-one + oxidized [NADPH--hemoprotein reductase] + H2O + H(+). The protein operates within steroid metabolism; cholesterol degradation. Its pathway is lipid metabolism; C21-steroid hormone metabolism. In terms of biological role, P450 monooxygenase that plays a major role in cholesterol homeostasis in the brain. Primarily catalyzes the hydroxylation (with S stereochemistry) at C-24 of cholesterol side chain, triggering cholesterol diffusion out of neurons and its further degradation. By promoting constant cholesterol elimination in neurons, may activate the mevalonate pathway and coordinate the synthesis of new cholesterol and nonsterol isoprenoids involved in synaptic activity and learning. Further hydroxylates cholesterol derivatives and hormone steroids on both the ring and side chain of these molecules, converting them into active oxysterols involved in lipid signaling and biosynthesis. Acts as an epoxidase converting cholesta-5,24-dien-3beta-ol/desmosterol into (24S),25-epoxycholesterol, an abundant lipid ligand of nuclear NR1H2 and NR1H3 receptors shown to promote neurogenesis in developing brain. May also catalyze the oxidative metabolism of xenobiotics, such as clotrimazole. The protein is Cholesterol 24-hydroxylase of Mus musculus (Mouse).